The primary structure comprises 498 residues: Histidine--tRNA ligase (498 aa).

The protein belongs to the class-II aminoacyl-tRNA synthetase family. Homodimer.

The protein resides in the cytoplasm. It carries out the reaction tRNA(His) + L-histidine + ATP = L-histidyl-tRNA(His) + AMP + diphosphate + H(+). This chain is Histidine--tRNA ligase, found in Mycoplasmopsis synoviae (strain 53) (Mycoplasma synoviae).